A 553-amino-acid chain; its full sequence is Zinc finger protein 426 (553 aa).

A KRAB domain is found at valine 40–glutamine 111. 11 C2H2-type zinc fingers span residues phenylalanine 222 to histidine 244, histidine 277 to histidine 299, tyrosine 305 to histidine 327, tyrosine 333 to histidine 355, tyrosine 361 to histidine 383, phenylalanine 389 to histidine 411, cysteine 417 to histidine 439, tyrosine 445 to histidine 467, tyrosine 473 to histidine 495, tyrosine 501 to histidine 525, and tyrosine 531 to histidine 553.

It localises to the nucleus. Functionally, may be involved in transcriptional regulation. The sequence is that of Zinc finger protein 426 (Znf426) from Rattus norvegicus (Rat).